The sequence spans 138 residues: Acidic phospholipase A2 Cvv-E6a (138 aa).

A signal peptide spans 1–16; it reads MRTLWIVAVLLLGVEG. 7 disulfide bridges follow: C42/C131, C44/C60, C59/C111, C65/C138, C66/C104, C73/C97, and C91/C102. Residues Y43, G45, and G47 each contribute to the Ca(2+) site. The active site involves H63. A Ca(2+)-binding site is contributed by D64. D105 is an active-site residue.

This sequence belongs to the phospholipase A2 family. Group II subfamily. D49 sub-subfamily. It depends on Ca(2+) as a cofactor. Expressed by the venom gland.

The protein localises to the secreted. It carries out the reaction a 1,2-diacyl-sn-glycero-3-phosphocholine + H2O = a 1-acyl-sn-glycero-3-phosphocholine + a fatty acid + H(+). Its function is as follows. Snake venom phospholipase A2 (PLA2) that significantly inhibits ADP-induced platelet aggregation in platelet-rich plasma of human, rabbit and guinea pig. PLA2 catalyzes the calcium-dependent hydrolysis of the 2-acyl groups in 3-sn-phosphoglycerides. This chain is Acidic phospholipase A2 Cvv-E6a, found in Crotalus viridis viridis (Prairie rattlesnake).